The sequence spans 30 residues: Diuretic hormone 2 (30 aa).

A Valine amide modification is found at valine 30.

This sequence belongs to the sauvagine/corticotropin-releasing factor/urotensin I family.

It is found in the secreted. Regulation of fluid secretion. The chain is Diuretic hormone 2 from Manduca sexta (Tobacco hawkmoth).